The chain runs to 154 residues: 3-hydroxyacyl-[acyl-carrier-protein] dehydratase FabZ (154 aa).

His-57 is an active-site residue.

Belongs to the thioester dehydratase family. FabZ subfamily.

The protein resides in the cytoplasm. The catalysed reaction is a (3R)-hydroxyacyl-[ACP] = a (2E)-enoyl-[ACP] + H2O. In terms of biological role, involved in unsaturated fatty acids biosynthesis. Catalyzes the dehydration of short chain beta-hydroxyacyl-ACPs and long chain saturated and unsaturated beta-hydroxyacyl-ACPs. The protein is 3-hydroxyacyl-[acyl-carrier-protein] dehydratase FabZ of Sinorhizobium fredii (strain NBRC 101917 / NGR234).